Reading from the N-terminus, the 200-residue chain is 3-isopropylmalate dehydratase small subunit (200 aa).

The protein belongs to the LeuD family. LeuD type 1 subfamily. In terms of assembly, heterodimer of LeuC and LeuD.

It carries out the reaction (2R,3S)-3-isopropylmalate = (2S)-2-isopropylmalate. It participates in amino-acid biosynthesis; L-leucine biosynthesis; L-leucine from 3-methyl-2-oxobutanoate: step 2/4. In terms of biological role, catalyzes the isomerization between 2-isopropylmalate and 3-isopropylmalate, via the formation of 2-isopropylmaleate. This Arthrobacter sp. (strain FB24) protein is 3-isopropylmalate dehydratase small subunit.